We begin with the raw amino-acid sequence, 228 residues long: Glycosylphosphatidylinositol-anchored high density lipoprotein-binding protein 1 (228 aa).

An N-terminal signal peptide occupies residues 1 to 22 (MKALRAVLLILLLSGQPGSGWA). Residues 21 to 32 (WAQEDGDADPEP) form a disordered region. The important for LPL transport to the lumenal surface of endothelial cells stretch occupies residues 24 to 48 (EDGDADPEPENYNYDDDDDEEEEEE). Residues 24–49 (EDGDADPEPENYNYDDDDDEEEEEET) are compositionally biased toward acidic residues. The residue at position 35 (Tyr35) is a Sulfotyrosine. Residues 61 to 148 (LQCYFCQVLH…PWQNPQVQNP (88 aa)) enclose the UPAR/Ly6 domain. 5 disulfides stabilise this stretch: Cys63-Cys88, Cys66-Cys75, Cys81-Cys109, Cys113-Cys129, and Cys130-Cys135. Residue Asn76 is glycosylated (N-linked (GlcNAc...) asparagine). The tract at residues 102–108 (LTTYSMW) is important for interaction with LPL. The tract at residues 145-200 (VQNPLGGRADSPLESGTRHPQGGKFSHPQVVKAAHPQSDGANLPKSGKANQPQGSG) is disordered. The GPI-anchor amidated glycine moiety is linked to residue Gly198. The propeptide at 199–228 (SGAGYPSGWTKFGNIALLLSFFTCLWASGA) is removed in mature form.

Mostly monomer, but also homodimer and homooligomer. Interacts with lipoprotein lipase (LPL). Interacts with high affinity with high-density lipoprotein (HDL). Interacts with chylomicrons. Interacts with APOA5. Glycosylation of Asn-76 is critical for cell surface localization. In terms of processing, sulfation of a Tyr in the N-terminal acidic region increases the affinity for LPL. As to expression, detected in fat tissue. Detected on the luminal surface of capillary endothelial cells in heart, skeletal muscle and brown adipose tissue (at protein level). Detected in heart and brown adipose tissue. Expressed at lower levels in lung and liver.

It localises to the apical cell membrane. It is found in the basolateral cell membrane. The protein resides in the cell membrane. Functionally, mediates the transport of lipoprotein lipase LPL from the basolateral to the apical surface of endothelial cells in capillaries. Anchors LPL on the surface of endothelial cells in the lumen of blood capillaries. Thereby, plays an important role in lipolytic processing of chylomicrons by LPL, triglyceride metabolism and lipid homeostasis. Binds chylomicrons and phospholipid particles that contain APOA5. Binds high-density lipoprotein (HDL) and plays a role in the uptake of lipids from HDL. In Mus musculus (Mouse), this protein is Glycosylphosphatidylinositol-anchored high density lipoprotein-binding protein 1.